A 727-amino-acid polypeptide reads, in one-letter code: Iron-sulfur clusters transporter ATM1, mitochondrial (727 aa).

The transit peptide at 1 to 25 (MLIGGAQNRLYQLRTSNILGLLRTR) directs the protein to the mitochondrion. The Mitochondrial matrix portion of the chain corresponds to 26–138 (SALRVGSKVE…PRGNTKVKVR (113 aa)). The tract at residues 87–107 (KSKLPNEDTAHNASEKNSKKT) is disordered. Over residues 90-107 (LPNEDTAHNASEKNSKKT) the composition is skewed to basic and acidic residues. The helical transmembrane segment at 139-160 (VLLALALLIGAKVLNVQVPFFF) threads the bilayer. Residues 139–429 (VLLALALLIG…LGSVYRELKQ (291 aa)) enclose the ABC transmembrane type-1 domain. Over 161–183 (KQIIDGMNVDWSDATVALPAALG) the chain is Mitochondrial intermembrane. A helical transmembrane segment spans residues 184–207 (LTIMCYGLARFGAVLFGELRNAIF). Topologically, residues 208–256 (ARVAQNAIRNVSLQTFEHLMKLDLGWHLSRQTGGLTRAMDRGTKGISYV) are mitochondrial matrix. A helical transmembrane segment spans residues 257-280 (LSAMVFHIIPITFEISVVCGILTY). Q281 is a topological domain (mitochondrial intermembrane). The chain crosses the membrane as a helical span at residues 282 to 302 (FGASFAGITFTTMLLYSIFTI). The Mitochondrial matrix segment spans residues 303 to 368 (RTTAWRTRFR…SQVKVAQSLA (66 aa)). Glutathione-binding positions include 308 to 312 (RTRFR) and 371 to 374 (NSGQ). The helical transmembrane segment at 369–387 (FLNSGQSLIFTTALTGMMY) threads the bilayer. The Mitochondrial intermembrane segment spans residues 388–402 (MGCTGVIGGDLTVGD). Residues 403-424 (LVLINQLVFQLSVPLNFLGSVY) traverse the membrane as a helical segment. G421 is a binding site for glutathione. Over 425 to 727 (RELKQSLIDM…ETLEKLNKSI (303 aa)) the chain is Mitochondrial matrix. In terms of domain architecture, ABC transporter spans 465–701 (IKFENVTFGY…ENSLYKELWR (237 aa)). ATP-binding positions include Y474 and 498–509 (GPSGSGKSTVLK).

The protein belongs to the ABC transporter superfamily. ABCB family. Heavy Metal importer (TC 3.A.1.210) subfamily. In terms of assembly, homodimer.

It is found in the mitochondrion inner membrane. Performs an essential function in the generation of cytoplasmic iron-sulfur proteins by mediating the ATP-dependent export of Fe/S cluster precursors synthesized by NFS1 and other mitochondrial proteins. Hydrolyzes ATP. Binds glutathione and may function by transporting a glutathione-conjugated iron-sulfur compound. This chain is Iron-sulfur clusters transporter ATM1, mitochondrial, found in Candida glabrata (strain ATCC 2001 / BCRC 20586 / JCM 3761 / NBRC 0622 / NRRL Y-65 / CBS 138) (Yeast).